Consider the following 196-residue polypeptide: Imidazole glycerol phosphate synthase subunit HisH (196 aa).

Residues 2 to 196 enclose the Glutamine amidotransferase type-1 domain; that stretch reads NIVIIDTNCS…QQLVKNFLEI (195 aa). Cysteine 77 serves as the catalytic Nucleophile. Catalysis depends on residues histidine 178 and glutamate 180.

As to quaternary structure, heterodimer of HisH and HisF.

Its subcellular location is the cytoplasm. The catalysed reaction is 5-[(5-phospho-1-deoxy-D-ribulos-1-ylimino)methylamino]-1-(5-phospho-beta-D-ribosyl)imidazole-4-carboxamide + L-glutamine = D-erythro-1-(imidazol-4-yl)glycerol 3-phosphate + 5-amino-1-(5-phospho-beta-D-ribosyl)imidazole-4-carboxamide + L-glutamate + H(+). It catalyses the reaction L-glutamine + H2O = L-glutamate + NH4(+). It participates in amino-acid biosynthesis; L-histidine biosynthesis; L-histidine from 5-phospho-alpha-D-ribose 1-diphosphate: step 5/9. Its function is as follows. IGPS catalyzes the conversion of PRFAR and glutamine to IGP, AICAR and glutamate. The HisH subunit catalyzes the hydrolysis of glutamine to glutamate and ammonia as part of the synthesis of IGP and AICAR. The resulting ammonia molecule is channeled to the active site of HisF. The polypeptide is Imidazole glycerol phosphate synthase subunit HisH (Blochmanniella pennsylvanica (strain BPEN)).